The sequence spans 662 residues: Protein Aster-C (662 aa).

A disordered region spans residues 1 to 33; sequence MEGALTARQIVNEGDSSLATELQEEPEESPGPV. In terms of domain architecture, GRAM spans 70-176; it reads EYRQQFTHLP…LIIFRLWQNV (107 aa). A disordered region spans residues 212-294; the sequence is VEENVQPRSP…EKRISRAPSK (83 aa). The segment covering 240-250 has biased composition (polar residues); that stretch reads VSFTQESVSRA. Over residues 265 to 276 the composition is skewed to basic and acidic residues; it reads LGKEDSQSERNV. Residues 326-497 enclose the VASt domain; it reads QGRLYINRVF…DLLMEESVLS (172 aa). The interval 506-530 is disordered; that stretch reads HSSLRRRRRTLNRTAEPVPKLSSQR. Positions 507 to 516 are enriched in basic residues; the sequence is SSLRRRRRTL. Residues 557–577 form a helical membrane-spanning segment; it reads LIVVMSIFLLLLVLLNVTLFL.

In terms of tissue distribution, highly expressed in the liver. Also found in the testis.

It is found in the endoplasmic reticulum membrane. It localises to the cell membrane. Its function is as follows. Cholesterol transporter that mediates non-vesicular transport of cholesterol from the plasma membrane (PM) to the endoplasmic reticulum (ER). Contains unique domains for binding cholesterol and the PM, thereby serving as a molecular bridge for the transfer of cholesterol from the PM to the ER. Plays a crucial role in cholesterol homeostasis and has the unique ability to localize to the PM based on the level of membrane cholesterol. In lipid-poor conditions localizes to the ER membrane and in response to excess cholesterol in the PM is recruited to the endoplasmic reticulum-plasma membrane contact sites (EPCS) which is mediated by the GRAM domain. At the EPCS, the sterol-binding VASt/ASTER domain binds to the cholesterol in the PM and facilitates its transfer from the PM to ER. The polypeptide is Protein Aster-C (Gramd1c) (Mus musculus (Mouse)).